A 117-amino-acid chain; its full sequence is UPF0342 protein GWCH70_0629 (117 aa).

The protein belongs to the UPF0342 family.

This Geobacillus sp. (strain WCH70) protein is UPF0342 protein GWCH70_0629.